The chain runs to 916 residues: Cadherin-4 (916 aa).

The N-terminal stretch at 1-20 (MTAGAGVLLLLLSLSGALRA) is a signal peptide. Positions 21–169 (HNEDLTTRET…NANGLRRRKR (149 aa)) are excised as a propeptide. Positions 124 to 168 (TSSPHSGHKPQKGKKVVALDPSPPPKDTLLPWPQHQNANGLRRRK) are disordered. Positions 129–138 (SGHKPQKGKK) are enriched in basic residues. Cadherin domains lie at 170-277 (DWVI…RPEF), 278-392 (INQV…PPEF), 393-507 (TAST…APYF), 508-613 (PSNH…DNAP), and 614-724 (ELLP…TIGA). Residues 170–734 (DWVIPPINVP…VAAAGLGTGA (565 aa)) lie on the Extracellular side of the membrane. Residues Asn-283, Asn-412, Asn-557, Asn-632, Asn-661, and Asn-702 are each glycosylated (N-linked (GlcNAc...) asparagine). The helical transmembrane segment at 735 to 756 (IVAILICILILLTMVLLFVMWM) threads the bilayer. Topologically, residues 757–916 (KRREKERHTK…ADMYGGGEED (160 aa)) are cytoplasmic. Residues 806 to 838 (MGHVPSKAPGVRRVDERPVGAEPQYPIRPMVPH) form a disordered region.

As to expression, expressed mainly in brain but also found in other tissues.

The protein resides in the cell membrane. In terms of biological role, cadherins are calcium-dependent cell adhesion proteins. They preferentially interact with themselves in a homophilic manner in connecting cells; cadherins may thus contribute to the sorting of heterogeneous cell types. May play an important role in retinal development. The protein is Cadherin-4 (CDH4) of Homo sapiens (Human).